The sequence spans 576 residues: Putative ankyrin repeat protein L86 (576 aa).

ANK repeat units lie at residues 68–101 (HGWT…DPNI), 118–147 (TRIN…NVNF), 159–188 (SGGF…NPNI), 192–223 (KGNT…DLNS), 227–260 (KRKT…NPNI), 264–300 (KGNT…NPNI), 304–337 (SGIS…DPNI), 341–373 (QGLT…DPNI), 377–408 (KGKN…NPNA), 412–446 (KGRT…SLTD), and 448–480 (NGKK…TFDV).

This chain is Putative ankyrin repeat protein L86, found in Acanthamoeba polyphaga mimivirus (APMV).